We begin with the raw amino-acid sequence, 64 residues long: Palmitoyl-CoA hydrolase (64 aa).

This sequence belongs to the type-B carboxylesterase/lipase family. Monomer and homotrimer.

The protein resides in the microsome. Its subcellular location is the endoplasmic reticulum. The catalysed reaction is hexadecanoyl-CoA + H2O = hexadecanoate + CoA + H(+). In terms of biological role, hydrolysis of a variety of CoA thioesters of long-chain fatty acids. This Rattus norvegicus (Rat) protein is Palmitoyl-CoA hydrolase.